The chain runs to 301 residues: HTH-type transcriptional regulator AbaB (301 aa).

The HTH lysR-type domain occupies 1 to 58 (MDLALLRTFVTVHRAGSFTRAAALLGLSQPAVTSQIRTLERQLGRPLFLRQARGVTPT). Positions 18-37 (FTRAAALLGLSQPAVTSQIR) form a DNA-binding region, H-T-H motif.

It belongs to the LysR transcriptional regulatory family.

In terms of biological role, putative regulator that may be involved in stimulating antibiotic production in S.antibioticus. This Streptomyces antibioticus protein is HTH-type transcriptional regulator AbaB.